Consider the following 127-residue polypeptide: Large ribosomal subunit protein bL17 (127 aa).

This sequence belongs to the bacterial ribosomal protein bL17 family. In terms of assembly, part of the 50S ribosomal subunit. Contacts protein L32.

The polypeptide is Large ribosomal subunit protein bL17 (Ligilactobacillus salivarius (strain UCC118) (Lactobacillus salivarius)).